Reading from the N-terminus, the 89-residue chain is Co-chaperonin GroES (89 aa).

This sequence belongs to the GroES chaperonin family. Heptamer of 7 subunits arranged in a ring. Interacts with the chaperonin GroEL.

It is found in the cytoplasm. Together with the chaperonin GroEL, plays an essential role in assisting protein folding. The GroEL-GroES system forms a nano-cage that allows encapsulation of the non-native substrate proteins and provides a physical environment optimized to promote and accelerate protein folding. GroES binds to the apical surface of the GroEL ring, thereby capping the opening of the GroEL channel. This is Co-chaperonin GroES from Kosmotoga olearia (strain ATCC BAA-1733 / DSM 21960 / TBF 19.5.1).